A 524-amino-acid chain; its full sequence is Probable inorganic phosphate transporter 1-2 (524 aa).

The Cytoplasmic segment spans residues 1–24 (MAEQQLGVLKALDVAKTQLYHFTA). Residues 25–45 (IVIAGMGFFTDAYDLFCVSLV) traverse the membrane as a helical segment. The Extracellular portion of the chain corresponds to 46–70 (TKLLGRIYYFNPESAKPGSLPPHVA). Residues 71–91 (AAVNGVALCGTLSGQLFFGWL) form a helical membrane-spanning segment. Over 92 to 99 (GDKLGRKK) the chain is Cytoplasmic. A helical transmembrane segment spans residues 100-120 (VYGLTLIMMILCSVASGLSFG). The Extracellular portion of the chain corresponds to 121-131 (NEAKGVMTTLC). A helical transmembrane segment spans residues 132 to 152 (FFRFWLGFGIGGDYPLSATIM). The Cytoplasmic portion of the chain corresponds to 153–161 (SEYANKKTR). Residues 162–182 (GAFIAAVFAMQGVGILAGGFV) traverse the membrane as a helical segment. Residues 183 to 211 (ALAVSSIFDKKFPAPTYAVNRALSTPPQV) are Extracellular-facing. Residues 212-232 (DYIWRIIVMFGALPAALTYYW) form a helical membrane-spanning segment. Residues 233 to 292 (RMKMPETARYTALVAKNIKQATADMSKVLQTDIELEERVEDDVKDPRQNYGLFSKEFLRR) lie on the Cytoplasmic side of the membrane. A helical transmembrane segment spans residues 293–313 (HGLHLLGTTSTWFLLDIAFYS). Residues 314–348 (QNLFQKDIFSAIGWIPKAATMNATHEVFRIARAQT) lie on the Extracellular side of the membrane. A helical transmembrane segment spans residues 349–369 (LIALCSTVPGYWFTVAFIDTI). The Cytoplasmic portion of the chain corresponds to 370-371 (GR). A helical transmembrane segment spans residues 372–392 (FKIQLNGFFMMTVFMFAIAFP). The Extracellular portion of the chain corresponds to 393–402 (YNHWIKPENR). Residues 403-423 (IGFVVMYSLTFFFANFGPNAT) form a helical membrane-spanning segment. The Cytoplasmic portion of the chain corresponds to 424 to 441 (TFIVPAEIFPARLRSTCH). The helical transmembrane segment at 442-462 (GISAAAGKAGAIIGAFGFLYA) threads the bilayer. Residues 463-484 (AQNQDKAKVDAGYPPGIGVKNS) lie on the Extracellular side of the membrane. Residues 485-505 (LIVLGVLNFIGMLFTFLVPEP) form a helical membrane-spanning segment. The Cytoplasmic segment spans residues 506–524 (KGKSLEELSGEAEVSHDEK).

It belongs to the major facilitator superfamily. Phosphate:H(+) symporter (TC 2.A.1.9) family. In terms of tissue distribution, root specific, especially in trichoblasts. In mature plants, localized in root cortical cells and young lateral roots.

The protein resides in the membrane. In terms of biological role, high-affinity transporter for external inorganic phosphate. This is Probable inorganic phosphate transporter 1-2 (PHT1-2) from Arabidopsis thaliana (Mouse-ear cress).